The following is a 794-amino-acid chain: Copper amine oxidase-like protein cao2 (794 aa).

Substrate-binding positions include 307 to 318 (AYDLGEYGVGYR) and 391 to 396 (AANYEY). Catalysis depends on aspartate 309, which acts as the Proton acceptor. Catalysis depends on tyrosine 394, which acts as the Schiff-base intermediate with substrate; via topaquinone. Tyrosine 394 is modified (2',4',5'-topaquinone). Cu cation-binding residues include histidine 445 and histidine 447. A disordered region spans residues 563 to 584 (GDYAPQASDDTPKGLSKWISDD). Mn(2+) contacts are provided by aspartate 593 and isoleucine 594. Histidine 604 contributes to the Cu cation binding site. The segment at 634–748 (ALDTSSSVNS…NGGHHHHHHH (115 aa)) is disordered. Positions 637–649 (TSSSVNSTSEATS) are enriched in low complexity. A compositionally biased stretch (basic and acidic residues) spans 652-714 (THHENLRDTS…DAAQKHEGRS (63 aa)). Residues 716–727 (TLAQPGQQNANQ) are compositionally biased toward polar residues.

This sequence belongs to the copper/topaquinone oxidase family. As to quaternary structure, homodimer. The cofactor is Cu cation. Requires Zn(2+) as cofactor. It depends on L-topaquinone as a cofactor. Mn(2+) is required as a cofactor. Post-translationally, topaquinone (TPQ) is generated by copper-dependent autoxidation of a specific tyrosyl residue.

Its subcellular location is the cytoplasm. The catalysed reaction is a primary methyl amine + O2 + H2O = an aldehyde + H2O2 + NH4(+). Copper amine oxidase-like protein that does not show any copper amine oxidase activity. May be the appropriate amine substrate for cao2 has not been identified yet. The protein is Copper amine oxidase-like protein cao2 (cao2) of Schizosaccharomyces pombe (strain 972 / ATCC 24843) (Fission yeast).